Consider the following 245-residue polypeptide: Phosphoribosylaminoimidazole-succinocarboxamide synthase (245 aa).

This sequence belongs to the SAICAR synthetase family.

It carries out the reaction 5-amino-1-(5-phospho-D-ribosyl)imidazole-4-carboxylate + L-aspartate + ATP = (2S)-2-[5-amino-1-(5-phospho-beta-D-ribosyl)imidazole-4-carboxamido]succinate + ADP + phosphate + 2 H(+). Its pathway is purine metabolism; IMP biosynthesis via de novo pathway; 5-amino-1-(5-phospho-D-ribosyl)imidazole-4-carboxamide from 5-amino-1-(5-phospho-D-ribosyl)imidazole-4-carboxylate: step 1/2. The chain is Phosphoribosylaminoimidazole-succinocarboxamide synthase from Trichormus variabilis (strain ATCC 29413 / PCC 7937) (Anabaena variabilis).